Here is a 920-residue protein sequence, read N- to C-terminus: Chitin synthase C (920 aa).

Disordered regions lie at residues M1–Q41 and I140–P173. Over residues Y154–Q163 the composition is skewed to acidic residues. 5 consecutive transmembrane segments (helical) span residues S466 to L486, R564 to W584, L608 to L628, V640 to A660, and M675 to V695. A glycan (N-linked (GlcNAc...) asparagine) is linked at N715. 4 helical membrane passes run F718–I738, F749–C769, A847–A867, and V892–L912.

This sequence belongs to the chitin synthase family. Class I subfamily.

The protein resides in the cell membrane. It carries out the reaction [(1-&gt;4)-N-acetyl-beta-D-glucosaminyl](n) + UDP-N-acetyl-alpha-D-glucosamine = [(1-&gt;4)-N-acetyl-beta-D-glucosaminyl](n+1) + UDP + H(+). Functionally, polymerizes chitin, a structural polymer of the cell wall and septum, by transferring the sugar moiety of UDP-GlcNAc to the non-reducing end of the growing chitin polymer. Involved in hyphal growth. The sequence is that of Chitin synthase C from Aspergillus oryzae (strain ATCC 42149 / RIB 40) (Yellow koji mold).